Consider the following 446-residue polypeptide: Probable ribosomal RNA small subunit methyltransferase B (446 aa).

S-adenosyl-L-methionine-binding positions include 260 to 266 (CAAPGGK), aspartate 284, aspartate 311, and aspartate 330. Residue cysteine 383 is the Nucleophile of the active site.

The protein belongs to the class I-like SAM-binding methyltransferase superfamily. RsmB/NOP family.

The protein localises to the cytoplasm. It catalyses the reaction cytidine(967) in 16S rRNA + S-adenosyl-L-methionine = 5-methylcytidine(967) in 16S rRNA + S-adenosyl-L-homocysteine + H(+). In terms of biological role, specifically methylates the cytosine at position 967 (m5C967) of 16S rRNA. This Synechocystis sp. (strain ATCC 27184 / PCC 6803 / Kazusa) protein is Probable ribosomal RNA small subunit methyltransferase B.